Here is a 134-residue protein sequence, read N- to C-terminus: Arsenate reductase (134 aa).

Catalysis depends on nucleophile residues cysteine 11, cysteine 83, and cysteine 90. Cystine bridges form between cysteine 11/cysteine 83 and cysteine 83/cysteine 90.

It belongs to the low molecular weight phosphotyrosine protein phosphatase family. Thioredoxin-coupled ArsC subfamily.

Its subcellular location is the cytoplasm. It catalyses the reaction arsenate + [thioredoxin]-dithiol + H(+) = arsenite + [thioredoxin]-disulfide + H2O. Catalyzes the reduction of arsenate [As(V)] to arsenite [As(III)]. The polypeptide is Arsenate reductase (Bacillus anthracis (strain A0248)).